Consider the following 85-residue polypeptide: Photosystem I reaction center subunit PsaK (85 aa).

2 helical membrane passes run T12–G34 and G54–I76.

It belongs to the PsaG/PsaK family.

The protein localises to the cellular thylakoid membrane. In Parasynechococcus marenigrum (strain WH8102), this protein is Photosystem I reaction center subunit PsaK.